A 546-amino-acid chain; its full sequence is Arginine--tRNA ligase (546 aa).

The 'HIGH' region signature appears at 117 to 127 (ANPTGPLHIGR).

Belongs to the class-I aminoacyl-tRNA synthetase family.

It is found in the cytoplasm. The catalysed reaction is tRNA(Arg) + L-arginine + ATP = L-arginyl-tRNA(Arg) + AMP + diphosphate. This chain is Arginine--tRNA ligase, found in Thermoplasma acidophilum (strain ATCC 25905 / DSM 1728 / JCM 9062 / NBRC 15155 / AMRC-C165).